The chain runs to 219 residues: Proteasome subunit beta (219 aa).

The propeptide at M1–G14 is removed in mature form; by autocatalysis. T15 (nucleophile) is an active-site residue.

The protein belongs to the peptidase T1B family. As to quaternary structure, the 20S proteasome core is composed of 14 alpha and 14 beta subunits that assemble into four stacked heptameric rings, resulting in a barrel-shaped structure. The two inner rings, each composed of seven catalytic beta subunits, are sandwiched by two outer rings, each composed of seven alpha subunits. The catalytic chamber with the active sites is on the inside of the barrel. Has a gated structure, the ends of the cylinder being occluded by the N-termini of the alpha-subunits. Is capped at one or both ends by the proteasome regulatory ATPase, PAN.

It is found in the cytoplasm. The enzyme catalyses Cleavage of peptide bonds with very broad specificity.. Its activity is regulated as follows. The formation of the proteasomal ATPase PAN-20S proteasome complex, via the docking of the C-termini of PAN into the intersubunit pockets in the alpha-rings, triggers opening of the gate for substrate entry. Interconversion between the open-gate and close-gate conformations leads to a dynamic regulation of the 20S proteasome proteolysis activity. In terms of biological role, component of the proteasome core, a large protease complex with broad specificity involved in protein degradation. In Methanococcus maripaludis (strain C5 / ATCC BAA-1333), this protein is Proteasome subunit beta.